Reading from the N-terminus, the 363-residue chain is ADP-ribosylhydrolase ARH3 (363 aa).

Mg(2+) is bound at residue E41. Residue T64 is modified to Phosphothreonine. Positions 76, 77, and 78 each coordinate Mg(2+). D77 is a binding site for substrate. Substrate contacts are provided by residues K146–G152, H182, L235, and I271. D314, D316, and T317 together coordinate Mg(2+).

This sequence belongs to the ADP-ribosylglycohydrolase family. In terms of assembly, monomer. Mg(2+) is required as a cofactor. In terms of tissue distribution, ubiquitous. Expressed in skin fibroblasts.

Its subcellular location is the nucleus. The protein localises to the cytoplasm. The protein resides in the chromosome. It localises to the mitochondrion matrix. It catalyses the reaction [(1''-&gt;2')-ADP-alpha-D-ribose](n) + H2O = [(1''-&gt;2')-ADP-alpha-D-ribose](n-1) + ADP-D-ribose. It carries out the reaction 1''-O-acetyl-ADP-alpha-D-ribose + H2O = ADP-D-ribose + acetate + H(+). The enzyme catalyses O-(ADP-D-ribosyl)-L-seryl-[protein] + H2O = ADP-D-ribose + L-seryl-[protein]. The catalysed reaction is alpha-NAD(+) + H2O = ADP-D-ribose + nicotinamide + H(+). With respect to regulation, the protein undergoes a dramatic conformational switch from closed to open states upon substrate-binding, which enables specific substrate recognition for the 1''-O-linkage. The glutamate flap (Glu-41) blocks substrate entrance to Mg(2+) in the unliganded closed state. In presence of substrate, Glu-41 is ejected from the active site: this closed-to-open transition significantly widens the substrate-binding channel and precisely positions the scissile 1''-O-linkage for cleavage while securing tightly 2'- and 3'-hydroxyls of ADP-ribose. Functionally, ADP-ribosylhydrolase that preferentially hydrolyzes the scissile alpha-O-linkage attached to the anomeric C1'' position of ADP-ribose and acts on different substrates, such as proteins ADP-ribosylated on serine and threonine, free poly(ADP-ribose) and O-acetyl-ADP-D-ribose. Specifically acts as a serine mono-ADP-ribosylhydrolase by mediating the removal of mono-ADP-ribose attached to serine residues on proteins, thereby playing a key role in DNA damage response. Serine ADP-ribosylation of proteins constitutes the primary form of ADP-ribosylation of proteins in response to DNA damage. Does not hydrolyze ADP-ribosyl-arginine, -cysteine, -diphthamide, or -asparagine bonds. Also able to degrade protein free poly(ADP-ribose), which is synthesized in response to DNA damage: free poly(ADP-ribose) acts as a potent cell death signal and its degradation by ADPRHL2 protects cells from poly(ADP-ribose)-dependent cell death, a process named parthanatos. Also hydrolyzes free poly(ADP-ribose) in mitochondria. Specifically digests O-acetyl-ADP-D-ribose, a product of deacetylation reactions catalyzed by sirtuins. Specifically degrades 1''-O-acetyl-ADP-D-ribose isomer, rather than 2''-O-acetyl-ADP-D-ribose or 3''-O-acetyl-ADP-D-ribose isomers. The protein is ADP-ribosylhydrolase ARH3 of Homo sapiens (Human).